The chain runs to 179 residues: Large ribosomal subunit protein uL6 (179 aa).

Belongs to the universal ribosomal protein uL6 family. As to quaternary structure, part of the 50S ribosomal subunit.

This protein binds to the 23S rRNA, and is important in its secondary structure. It is located near the subunit interface in the base of the L7/L12 stalk, and near the tRNA binding site of the peptidyltransferase center. The polypeptide is Large ribosomal subunit protein uL6 (Spiroplasma citri).